We begin with the raw amino-acid sequence, 283 residues long: Aspartate dehydrogenase domain-containing protein (283 aa).

Phosphoserine occurs at positions 20 and 168.

The protein belongs to the L-aspartate dehydrogenase family.

In Homo sapiens (Human), this protein is Aspartate dehydrogenase domain-containing protein.